Consider the following 1119-residue polypeptide: Transient receptor potential cation channel subfamily A member 1 (1119 aa).

The Cytoplasmic segment spans residues 1 to 718 (MKRSLRKMWR…MKWLAYGFRA (718 aa)). ANK repeat units lie at residues 62-92 (MDTF…EVLH), 97-126 (YGNT…NPNL), 130-160 (NMMA…DVNL), 164-193 (NGNT…KPCK), 197-226 (WGCF…EHGY), 238-267 (GKAT…QIDP), 271-301 (GRCT…SVDI), 308-337 (CHET…DINK), 341-370 (EGRS…QVDI), 374-403 (FGRN…QQIK), 412-441 (DGCT…SIHS), 445-474 (DKKS…DTRL), 481-510 (HGMT…LFLS), 513-542 (NGWT…KCTD), 547-576 (DGNT…DIVL), and 579-609 (QQAS…DECL). 5 disulfide bridges follow: cysteine 192–cysteine 665, cysteine 462–cysteine 665, cysteine 608–cysteine 621, cysteine 621–cysteine 665, and cysteine 633–cysteine 856. Proline 394 carries the post-translational modification 4-hydroxyproline; by EGLN1; transient; in normoxia and hyperoxia. Positions 414 and 421 each coordinate (E)-cinnamaldehyde. Cysteine 621 contacts (E)-cinnamaldehyde. Cysteine 633 carries the cysteine sulfenic acid (-SOH); transient; in hyperoxia modification. Cysteine 641, cysteine 665, and lysine 710 together coordinate (E)-cinnamaldehyde. The chain crosses the membrane as a helical span at residues 719-739 (HMMNLGSYCLGLIPMTILVVN). The Extracellular segment spans residues 740–767 (IKPGMAFNSTGIINETSDHSEILDTTNS). Asparagine 747 and asparagine 753 each carry an N-linked (GlcNAc...) asparagine glycan. Residues 768–793 (YLIKTCMILVFLSSIFGYCKEAGQIF) form a helical membrane-spanning segment. Ca(2+)-binding residues include glutamate 788 and glutamine 791. At 794-798 (QQKRN) the chain is on the cytoplasmic side. A helical transmembrane segment spans residues 799–823 (YFMDISNVLEWIIYTTGIIFVLPLF). Positions 805 and 808 each coordinate Ca(2+). Over 824–829 (VEIPAH) the chain is Extracellular. The helical transmembrane segment at 830 to 850 (LQWQCGAIAVYFYWMNFLLYL) threads the bilayer. At 851–862 (QRFENCGIFIVM) the chain is on the cytoplasmic side. Residue cysteine 856 is modified to Cysteine sulfenic acid (-SOH); transient; in hyperoxia. A helical membrane pass occupies residues 863–892 (LEVILKTLLRSTVVFIFLLLAFGLSFYILL). Residues 893–901 (NLQDPFSSP) are Extracellular-facing. The segment at residues 902 to 922 (LLSIIQTFSMMLGDINYRESF) is an intramembrane region (pore-forming). The Extracellular portion of the chain corresponds to 923 to 933 (LEPYLRNELAH). A helical transmembrane segment spans residues 934 to 960 (PVLSFAQLVSFTIFVPIVLMNLLIGLA). At 961-1119 (VGDIAEVQKH…VKAKTHHLEP (159 aa)) the chain is on the cytoplasmic side. A coiled-coil region spans residues 1042-1071 (MEILKQKYRLKDLTFLLEKQHELIKLIIQK). Position 1046-1052 (1046-1052 (KQKYRLK)) interacts with a 1,2-diacyl-sn-glycero-3-phospho-(1D-myo-inositol).

Belongs to the transient receptor (TC 1.A.4) family. Homotetramer. Interacts with TMEM100. Interacts with EGLN1. Interacts with the scorpion wasabi receptor toxin at the same site that electrophiles but in a non-covalent manner. In terms of processing, TRPA1 activation by electrophiles occurs though covalent modification of specific cysteine residues in the N-terminal cytoplasmic domain. Post-translationally, hydroxylation is required for TRPA1 activity inhibition in normoxia. In hypoxia, the decrease in oxygen concentration diminishes the activity of the hydroxylase EGLN1, thus relieving TRPA1 from inhibition and ultimately leading to channel activation. Oxidation of Cys-633 and Cys-856 in hyperoxia may override the hydroxylase EGLN1-mediated inhibition, causing TRPA1 activation.

Its subcellular location is the cell membrane. The catalysed reaction is Ca(2+)(in) = Ca(2+)(out). The enzyme catalyses Mg(2+)(in) = Mg(2+)(out). It catalyses the reaction Na(+)(in) = Na(+)(out). It carries out the reaction K(+)(in) = K(+)(out). The catalysed reaction is Zn(2+)(in) = Zn(2+)(out). With respect to regulation, electrophilic ligands activate the channel by covalent modification of intracellular cysteines; Cys-621 plays a key role in covalent binding of electrophiles. Extracellular Ca(2+) both potentiates and inactivates TRPA1; a rapid potentiation follows by slow desensitization. Activated by increase in intracellular Ca(2+) concentration. Inhibited by the potent blocker of TRPV channels ruthenium red, A-967079, AP-18, HC-030031, and aryl sulfonamide derivative (S)-N-(4-chlorobenzyl)-1-((4-fluorophenyl)sulfonyl)pyrrolidine-2-carboxamide (ASD). Activated by benzyl isothiocyanate (BITC), iodoacetamide, sulfhydryl reactive agent MTSEA, N-methyl maleimide (NMM), N-ethylmaleimide (NEM), and 2-aminoethyldiphenylborinate (2-APB). Also activated by hyperoxia. Acivated by intracellular Zn(2+). TRPA1 activation may critically depend on the presence of small intracellular compounds such as polyphosphates. Its function is as follows. Ligand-activated Ca(2+)-permeable, nonselective cation channel involved in pain detection and possibly also in cold perception, oxygen concentration perception, cough, itch, and inner ear function. Has a relatively high Ca(2+) selectivity, with a preference for divalent over monovalent cations (Ca(2+) &gt; Ba(2+) &gt; Mg(2+) &gt; NH4(+) &gt; Li(+) &gt; K(+)), the influx of cation into the cytoplasm leads to membrane depolarization. Has a central role in the pain response to endogenous inflammatory mediators, such as bradykinin and to a diverse array of irritants. Activated by a large variety of structurally unrelated electrophilic and non-electrophilic chemical compounds, such as allylthiocyanate (AITC) from mustard oil or wasabi, cinnamaldehyde, diallyl disulfide (DADS) from garlic, and acrolein, an environmental irritant. Electrophilic ligands activate TRPA1 by interacting with critical N-terminal Cys residues in a covalent manner. Non-electrophile agonists bind at distinct sites in the transmembrane domain to promote channel activation. Also acts as an ionotropic cannabinoid receptor by being activated by delta(9)-tetrahydrocannabinol (THC), the psychoactive component of marijuana. May be a component for the mechanosensitive transduction channel of hair cells in inner ear, thereby participating in the perception of sounds. The protein is Transient receptor potential cation channel subfamily A member 1 of Homo sapiens (Human).